Reading from the N-terminus, the 207-residue chain is Glycerol-3-phosphate acyltransferase (207 aa).

5 consecutive transmembrane segments (helical) span residues 2–22 (ILVL…GVVI), 47–67 (MLGP…GTLA), 72–92 (ILFG…AVFG), 121–141 (FFVI…MVSV), and 155–175 (LVYH…VFLI).

Belongs to the PlsY family. In terms of assembly, probably interacts with PlsX.

The protein resides in the cell membrane. It catalyses the reaction an acyl phosphate + sn-glycerol 3-phosphate = a 1-acyl-sn-glycero-3-phosphate + phosphate. Its pathway is lipid metabolism; phospholipid metabolism. Catalyzes the transfer of an acyl group from acyl-phosphate (acyl-PO(4)) to glycerol-3-phosphate (G3P) to form lysophosphatidic acid (LPA). This enzyme utilizes acyl-phosphate as fatty acyl donor, but not acyl-CoA or acyl-ACP. In Lacticaseibacillus casei (strain BL23) (Lactobacillus casei), this protein is Glycerol-3-phosphate acyltransferase.